We begin with the raw amino-acid sequence, 270 residues long: 5'-AMP-activated protein kinase subunit beta-1 (270 aa).

The tract at residues 1-43 is disordered; that stretch reads MGNTSSERAALERQAGHKTPRRDSSGGTKDGDRPKILMDSPED. Glycine 2 carries the N-myristoyl glycine lipid modification. Threonine 4 carries the post-translational modification Phosphothreonine. Residues serine 5 and serine 6 each carry the phosphoserine modification. The span at 9–36 shows a compositional bias: basic and acidic residues; sequence AALERQAGHKTPRRDSSGGTKDGDRPKI. Threonine 19 carries the post-translational modification Phosphothreonine. Serine 24 and serine 25 each carry phosphoserine; by autocatalysis. A phosphoserine mark is found at serine 40, serine 96, and serine 101. The segment at 68-163 is glycogen-binding domain; the sequence is EVNEKAPAQA…QVKKTDFEVF (96 aa). Residue serine 108 is modified to Phosphoserine; by autocatalysis. A Phosphothreonine modification is found at threonine 148. Serine 182 is modified (phosphoserine). Residue lysine 201 is modified to N6-succinyllysine.

The protein belongs to the 5'-AMP-activated protein kinase beta subunit family. In terms of assembly, AMPK is a heterotrimer of an alpha catalytic subunit (PRKAA1 or PRKAA2), a beta (PRKAB1 or PRKAB2) and a gamma non-catalytic subunits (PRKAG1, PRKAG2 or PRKAG3). Interacts with FNIP1 and FNIP2. Phosphorylated when associated with the catalytic subunit (PRKAA1 or PRKAA2). Phosphorylated by ULK1; leading to negatively regulate AMPK activity and suggesting the existence of a regulatory feedback loop between ULK1 and AMPK. In terms of tissue distribution, highly expressed in kidney, heart, white adipose tissue, lung and spleen.

Non-catalytic subunit of AMP-activated protein kinase (AMPK), an energy sensor protein kinase that plays a key role in regulating cellular energy metabolism. In response to reduction of intracellular ATP levels, AMPK activates energy-producing pathways and inhibits energy-consuming processes: inhibits protein, carbohydrate and lipid biosynthesis, as well as cell growth and proliferation. AMPK acts via direct phosphorylation of metabolic enzymes, and by longer-term effects via phosphorylation of transcription regulators. Also acts as a regulator of cellular polarity by remodeling the actin cytoskeleton; probably by indirectly activating myosin. Beta non-catalytic subunit acts as a scaffold on which the AMPK complex assembles, via its C-terminus that bridges alpha (PRKAA1 or PRKAA2) and gamma subunits (PRKAG1, PRKAG2 or PRKAG3). The sequence is that of 5'-AMP-activated protein kinase subunit beta-1 (Prkab1) from Rattus norvegicus (Rat).